Here is a 324-residue protein sequence, read N- to C-terminus: Beta-ketoacyl-[acyl-carrier-protein] synthase III (324 aa).

Catalysis depends on residues C113 and H251. Residues 252–256 (QANKR) form an ACP-binding region. N281 is an active-site residue.

The protein belongs to the thiolase-like superfamily. FabH family. As to quaternary structure, homodimer.

It is found in the cytoplasm. The enzyme catalyses malonyl-[ACP] + acetyl-CoA + H(+) = 3-oxobutanoyl-[ACP] + CO2 + CoA. It participates in lipid metabolism; fatty acid biosynthesis. Catalyzes the condensation reaction of fatty acid synthesis by the addition to an acyl acceptor of two carbons from malonyl-ACP. Catalyzes the first condensation reaction which initiates fatty acid synthesis and may therefore play a role in governing the total rate of fatty acid production. Possesses both acetoacetyl-ACP synthase and acetyl transacylase activities. Its substrate specificity determines the biosynthesis of branched-chain and/or straight-chain of fatty acids. The polypeptide is Beta-ketoacyl-[acyl-carrier-protein] synthase III (Bartonella henselae (strain ATCC 49882 / DSM 28221 / CCUG 30454 / Houston 1) (Rochalimaea henselae)).